We begin with the raw amino-acid sequence, 235 residues long: Transmembrane emp24 domain-containing protein 9 (235 aa).

An N-terminal signal peptide occupies residues 1–37 (MAAVRGVRVVGTSPGLLLGRGMRAFLLLLCLAARGGA). The Lumenal portion of the chain corresponds to 38-202 (LYFHIGETEK…RQTSESTNQR (165 aa)). The 99-residue stretch at 47 to 145 (KKCFIEEIPD…MLRVHLDIQV (99 aa)) folds into the GOLD domain. A required for interaction with STX17 region spans residues 121-160 (CLHSNSTKFSLFAGGMLRVHLDIQVGEHANDYAEIAAKDK). An N-linked (GlcNAc...) asparagine glycan is attached at Asn-125. The stretch at 154–184 (EIAAKDKLSELQLRVRQLVEQVEQIQKEQNY) forms a coiled coil. At Lys-160 the chain carries N6-acetyllysine. A helical membrane pass occupies residues 203 to 222 (VLWWSILQTLILVAIGVWQM). Residues 223 to 235 (RHLKSFFEAKKLV) lie on the Cytoplasmic side of the membrane. The short motif at 228-229 (FF) is the COPII vesicle coat-binding element. Positions 228 to 235 (FFEAKKLV) match the COPI vesicle coat-binding motif.

This sequence belongs to the EMP24/GP25L family. In terms of assembly, monomer and homodimer in endoplasmic reticulum. Predominantly monomeric and to lesser extent homodimeric in endoplasmic reticulum-Golgi intermediate compartment and cis-Golgi network. Probably oligomerizes with other members of the EMP24/GP25L family such as TMED2, TMED7 and TMED10. Interacts with TMED5. Interacts (via C-terminus) with COPG1; the interaction involves dimeric TMED9. Interacts with PTPN2 and SPAST. Interacts with STX17; the interaction is direct. Post-translationally, N-linked glycosylated containing high mannose.

Its subcellular location is the endoplasmic reticulum membrane. The protein resides in the golgi apparatus. It localises to the cis-Golgi network membrane. It is found in the endoplasmic reticulum-Golgi intermediate compartment membrane. The protein localises to the trans-Golgi network membrane. Functionally, appears to be involved in vesicular protein trafficking, mainly in the early secretory pathway. In COPI vesicle-mediated retrograde transport involved in the coatomer recruitment to membranes of the early secretory pathway. Increases coatomer-dependent activity of ARFGAP2. Thought to play a crucial role in the specific retention of p24 complexes in cis-Golgi membranes; specifically contributes to the coupled localization of TMED2 and TMED10 in the cis-Golgi network. May be involved in organization of intracellular membranes, such as of the ER-Golgi intermediate compartment and the Golgi apparatus. Involved in ER localization of PTPN2. This is Transmembrane emp24 domain-containing protein 9 (Tmed9) from Rattus norvegicus (Rat).